Consider the following 64-residue polypeptide: Alpha-mammal toxin AnCra1 (64 aa).

The 63-residue stretch at 2 to 64 (KDGYIVDDVN…VRTKGPGRCN (63 aa)) folds into the LCN-type CS-alpha/beta domain. 4 cysteine pairs are disulfide-bonded: Cys-12-Cys-63, Cys-16-Cys-36, Cys-22-Cys-46, and Cys-26-Cys-48.

This sequence belongs to the long (4 C-C) scorpion toxin superfamily. Sodium channel inhibitor family. Alpha subfamily. In terms of tissue distribution, expressed by the venom gland.

It localises to the secreted. Functionally, alpha toxins bind voltage-independently at site-3 of sodium channels (Nav) and inhibit the inactivation of the activated channels, thereby blocking neuronal transmission. This toxin is active against mammals. The recombinant toxin selectively inhibits the fast inactivation of hNav1.7/SCN9A channel (EC(50)=136.7 nM). Is potent in inhibiting the fast inactivation of hNav1.7 and has little effect on the steady-state inactivation. In vivo, intravenous injection into mice induces muscle contraction, leading to severe paralysis and death. This is Alpha-mammal toxin AnCra1 from Androctonus crassicauda (Arabian fat-tailed scorpion).